The primary structure comprises 261 residues: uncharacterized protein (261 aa).

The 236-residue stretch at 1–236 (MEIKEITIIG…SRKINEVDNW (236 aa)) folds into the ABC transporter domain. Residue 36-43 (GPTGSGKS) participates in ATP binding.

The protein belongs to the ABC transporter superfamily.

This is an uncharacterized protein from Methanocaldococcus jannaschii (strain ATCC 43067 / DSM 2661 / JAL-1 / JCM 10045 / NBRC 100440) (Methanococcus jannaschii).